The chain runs to 182 residues: Shikimate kinase (182 aa).

14–19 contributes to the ATP binding site; the sequence is GAGKTT. Thr-18 contributes to the Mg(2+) binding site. Asp-36, Arg-60, and Gly-84 together coordinate substrate. Arg-122 provides a ligand contact to ATP. Position 141 (Arg-141) interacts with substrate.

This sequence belongs to the shikimate kinase family. As to quaternary structure, monomer. Mg(2+) is required as a cofactor.

It is found in the cytoplasm. It catalyses the reaction shikimate + ATP = 3-phosphoshikimate + ADP + H(+). Its pathway is metabolic intermediate biosynthesis; chorismate biosynthesis; chorismate from D-erythrose 4-phosphate and phosphoenolpyruvate: step 5/7. Its function is as follows. Catalyzes the specific phosphorylation of the 3-hydroxyl group of shikimic acid using ATP as a cosubstrate. This chain is Shikimate kinase, found in Marinomonas sp. (strain MWYL1).